The primary structure comprises 293 residues: Ribonuclease HIII (293 aa).

The region spanning 78-293 (LPLIGTDEVG…TEKAKKRLER (216 aa)) is the RNase H type-2 domain. Residues D84, E85, and D187 each coordinate a divalent metal cation.

This sequence belongs to the RNase HII family. RnhC subfamily. It depends on Mn(2+) as a cofactor. Mg(2+) serves as cofactor.

The protein resides in the cytoplasm. The enzyme catalyses Endonucleolytic cleavage to 5'-phosphomonoester.. Its function is as follows. Endonuclease that specifically degrades the RNA of RNA-DNA hybrids. The polypeptide is Ribonuclease HIII (Streptococcus pneumoniae (strain JJA)).